The primary structure comprises 209 residues: Uridine kinase (209 aa).

Residue 12-19 (GGSGSGKT) participates in ATP binding.

It belongs to the uridine kinase family.

The protein localises to the cytoplasm. The enzyme catalyses uridine + ATP = UMP + ADP + H(+). It carries out the reaction cytidine + ATP = CMP + ADP + H(+). It participates in pyrimidine metabolism; CTP biosynthesis via salvage pathway; CTP from cytidine: step 1/3. Its pathway is pyrimidine metabolism; UMP biosynthesis via salvage pathway; UMP from uridine: step 1/1. In Listeria innocua serovar 6a (strain ATCC BAA-680 / CLIP 11262), this protein is Uridine kinase.